We begin with the raw amino-acid sequence, 761 residues long: Ribonucleoside-diphosphate reductase 1 subunit alpha (761 aa).

Residues 5 to 95 (LLVTKRDGRT…IFHLRKKAFG (91 aa)) form the ATP-cone domain. Residues K9, 15–21 (ERINLDK), T55, and K91 contribute to the ATP site. Residue T209 participates in GDP binding. A disulfide bridge connects residues C225 and C462. Residues 232–234 (DSL), R262, and R269 each bind dTTP. Residue N437 participates in GDP binding. The Proton acceptor role is filled by N437. The active-site Cysteine radical intermediate is C439. GDP contacts are provided by residues E441 and 623–625 (ETS). Residue E441 is the Proton acceptor of the active site.

The protein belongs to the ribonucleoside diphosphate reductase large chain family. As to quaternary structure, tetramer of two alpha (R1) and two beta (R2) subunits. The B1 protein is a dimer of alpha subunits. A radical transfer pathway occurs between 'Tyr-122' of R2 and R1.

It carries out the reaction a 2'-deoxyribonucleoside 5'-diphosphate + [thioredoxin]-disulfide + H2O = a ribonucleoside 5'-diphosphate + [thioredoxin]-dithiol. Under complex allosteric control mediated by deoxynucleoside triphosphates and ATP binding to separate specificity and activation sites on the alpha subunit. The type of nucleotide bound at the specificity site determines substrate preference. It seems probable that ATP makes the enzyme reduce CDP and UDP, dGTP favors ADP reduction and dTTP favors GDP reduction. Stimulated by ATP and inhibited by dATP binding to the activity site. Provides the precursors necessary for DNA synthesis. Catalyzes the biosynthesis of deoxyribonucleotides from the corresponding ribonucleotides. R1 contains the binding sites for both substrates and allosteric effectors and carries out the actual reduction of the ribonucleotide. In Salmonella typhimurium (strain LT2 / SGSC1412 / ATCC 700720), this protein is Ribonucleoside-diphosphate reductase 1 subunit alpha (nrdA).